A 390-amino-acid chain; its full sequence is Transcription factor bHLH76 (390 aa).

Positions 147–217 are disordered; the sequence is NVSEDSQSSG…SEKQPSDSLK (71 aa). Residues 207-217 show a composition bias toward basic and acidic residues; sequence NSEKQPSDSLK. Residues 229-279 enclose the bHLH domain; that stretch reads QATNSHSLAERVRREKISERMKFLQDLVPGCDKVTGKAVMLDEIINYVQSL.

Homodimer. Interacts with IBH1. Binds reversibly to CRY2 after blue light illumination. Expressed constitutively in roots, leaves, stems, and flowers.

It localises to the nucleus. Its function is as follows. Transcriptional activator involved in cell elongation. Regulates the expression of a subset of genes involved in cell expansion by binding to the G-box motif. Binds to chromatin DNA of the FT gene and promotes its expression, and thus triggers flowering in response to blue light. The chain is Transcription factor bHLH76 (BHLH76) from Arabidopsis thaliana (Mouse-ear cress).